We begin with the raw amino-acid sequence, 233 residues long: Mediator of RNA polymerase II transcription subunit 7 (233 aa).

Residue lysine 185 forms a Glycyl lysine isopeptide (Lys-Gly) (interchain with G-Cter in SUMO1); alternate linkage. Residue lysine 185 forms a Glycyl lysine isopeptide (Lys-Gly) (interchain with G-Cter in SUMO2); alternate linkage. The tract at residues 188-213 (PMDADDSNNCTGQSDQQRENSGHRRD) is disordered. Serine 194 is modified (phosphoserine). Residues 203–213 (QQRENSGHRRD) are compositionally biased toward basic and acidic residues.

It belongs to the Mediator complex subunit 7 family. In terms of assembly, component of the Mediator complex, which is composed of MED1, MED4, MED6, MED7, MED8, MED9, MED10, MED11, MED12, MED13, MED13L, MED14, MED15, MED16, MED17, MED18, MED19, MED20, MED21, MED22, MED23, MED24, MED25, MED26, MED27, MED29, MED30, MED31, CCNC, CDK8 and CDC2L6/CDK11. The MED12, MED13, CCNC and CDK8 subunits form a distinct module termed the CDK8 module. Mediator containing the CDK8 module is less active than Mediator lacking this module in supporting transcriptional activation. Individual preparations of the Mediator complex lacking one or more distinct subunits have been variously termed ARC, CRSP, DRIP, PC2, SMCC and TRAP.

The protein resides in the nucleus. Component of the Mediator complex, a coactivator involved in the regulated transcription of nearly all RNA polymerase II-dependent genes. Mediator functions as a bridge to convey information from gene-specific regulatory proteins to the basal RNA polymerase II transcription machinery. Mediator is recruited to promoters by direct interactions with regulatory proteins and serves as a scaffold for the assembly of a functional preinitiation complex with RNA polymerase II and the general transcription factors. This is Mediator of RNA polymerase II transcription subunit 7 (MED7) from Sus scrofa (Pig).